A 119-amino-acid polypeptide reads, in one-letter code: Chorion class CA protein ERA.3 (119 aa).

The first 21 residues, 1-21 (MSYFVVFAICIQACLFHNVYS), serve as a signal peptide directing secretion. The tract at residues 22 to 55 (QCLGRVGPGGPPLGPYGGPLGGPGYGPVGYGGCG) is left arm. Positions 56-103 (GYGGSGIGNVAVAGELPVVGSSAVMGQVPVIGAVEFAGPACAVGSVSI) are central domain. The segment at 104–119 (SGACGPTCGCGGLPYY) is right arm.

This sequence belongs to the chorion protein family.

In terms of biological role, this protein is one of many from the eggshell of the silk moth. The polypeptide is Chorion class CA protein ERA.3 (ERA.3) (Bombyx mori (Silk moth)).